Reading from the N-terminus, the 179-residue chain is Replication restart protein DnaT (179 aa).

Polar residues predominate over residues 151 to 168; it reads SRSSNGGMPQRDINSVSE. Residues 151-179 are disordered; that stretch reads SRSSNGGMPQRDINSVSEPDNHIPPGFRG.

This sequence belongs to the DnaT family. In terms of assembly, homooligomerizes. Interacts with PriB. Component of the replication restart primosome. Primosome assembly occurs via a 'hand-off' mechanism. PriA binds to replication forks, subsequently PriB then DnaT bind; DnaT then displaces ssDNA to generate the helicase loading substrate.

In terms of biological role, involved in the restart of stalled replication forks, which reloads the replicative helicase on sites other than the origin of replication. Can function in multiple replication restart pathways. Displaces ssDNA from a PriB-ssDNA complex. Probably forms a spiral filament on ssDNA. This chain is Replication restart protein DnaT, found in Salmonella heidelberg (strain SL476).